The sequence spans 79 residues: Cytochrome b (79 aa).

3 helical membrane passes run 1-7 (TALFLAM), 31-52 (WLIR…YLHI), and 67-79 (WNVG…LTMM). Heme b is bound by residues His37 and His51.

Belongs to the cytochrome b family. The cytochrome bc1 complex contains 3 respiratory subunits (MT-CYB, CYC1 and UQCRFS1), 2 core proteins (UQCRC1 and UQCRC2) and probably 6 low-molecular weight proteins. Heme b serves as cofactor.

Its subcellular location is the mitochondrion inner membrane. Its function is as follows. Component of the ubiquinol-cytochrome c reductase complex (complex III or cytochrome b-c1 complex) that is part of the mitochondrial respiratory chain. The b-c1 complex mediates electron transfer from ubiquinol to cytochrome c. Contributes to the generation of a proton gradient across the mitochondrial membrane that is then used for ATP synthesis. In Amphilophus citrinellus (Midas cichlid), this protein is Cytochrome b (mt-cyb).